We begin with the raw amino-acid sequence, 320 residues long: Mas-related G-protein coupled receptor member D (320 aa).

Residues 1–33 lie on the Extracellular side of the membrane; it reads MNQTLNSSGTAELALNHSRGSVVHAACLVLSSL. N-linked (GlcNAc...) asparagine glycans are attached at residues Asn2, Asn6, and Asn16. A helical transmembrane segment spans residues 34–54; the sequence is AMFTCLCGMAGNSMVIWLLGF. The Cytoplasmic portion of the chain corresponds to 55–62; it reads RMRRTPFS. A helical membrane pass occupies residues 63–83; sequence IYILNLAAADLLFVFCMAAML. Topologically, residues 84 to 112 are extracellular; the sequence is SLETQPLVSTTDKVHELMKRLKYFAYTVG. A helical transmembrane segment spans residues 113–133; that stretch reads LSLLTAISTQRCLSVLFPIWF. The Cytoplasmic segment spans residues 134-142; sequence KCHRPRHLS. The helical transmembrane segment at 143–163 threads the bilayer; that stretch reads AWVCALLWMLCLLTNGLTSCF. Residues 164-182 are Extracellular-facing; sequence CSKFLKFNKDQCFRVDMVQ. Residues 183–203 form a helical membrane-spanning segment; the sequence is AALIMGVLTPVMTLSSLTLFV. Residues 204 to 218 lie on the Cytoplasmic side of the membrane; sequence RVRRSSQQWRRQPTR. The chain crosses the membrane as a helical span at residues 219–239; the sequence is LFVVVLASVLVFLICSLPLGF. Residues 240-257 are Extracellular-facing; sequence YWFVLYWLNLPPDTKVLY. Residues 258–280 form a helical membrane-spanning segment; that stretch reads FNLSRLSSSMSSSANPLIYFLVG. The Cytoplasmic portion of the chain corresponds to 281 to 320; sequence SRRSRRLQGSLGTVLQRALREEPELEGGETPTTGTNEMGA. The disordered stretch occupies residues 301–320; it reads EEPELEGGETPTTGTNEMGA. A compositionally biased stretch (low complexity) spans 308–320; it reads GETPTTGTNEMGA.

The protein belongs to the G-protein coupled receptor 1 family. Mas subfamily. In terms of tissue distribution, co-expressed in the small diameter neurons with P2X3 and VR1 in dorsal root ganglia.

Its subcellular location is the cell membrane. Functionally, may regulate nociceptor function and/or development, including the sensation or modulation of pain. Functions as a specific membrane receptor for beta-alanine. The receptor couples with G-protein G(q) and G(i). This is Mas-related G-protein coupled receptor member D (MRGPRD) from Macaca fascicularis (Crab-eating macaque).